A 124-amino-acid chain; its full sequence is Group 1 truncated hemoglobin GlbN (124 aa).

The heme site is built by His-46, His-70, and His-117.

It belongs to the truncated hemoglobin family. Group I subfamily. Monomer. The cofactor is heme.

Forms a very stable complex with oxygen. The oxygen dissociation rate is 0.011 sec(-1). This Synechocystis sp. (strain ATCC 27184 / PCC 6803 / Kazusa) protein is Group 1 truncated hemoglobin GlbN (glbN).